Reading from the N-terminus, the 148-residue chain is D-aminoacyl-tRNA deacylase (148 aa).

Positions 137-138 (GP) match the Gly-cisPro motif, important for rejection of L-amino acids motif.

The protein belongs to the DTD family. Homodimer.

It localises to the cytoplasm. The enzyme catalyses glycyl-tRNA(Ala) + H2O = tRNA(Ala) + glycine + H(+). It carries out the reaction a D-aminoacyl-tRNA + H2O = a tRNA + a D-alpha-amino acid + H(+). Its function is as follows. An aminoacyl-tRNA editing enzyme that deacylates mischarged D-aminoacyl-tRNAs. Also deacylates mischarged glycyl-tRNA(Ala), protecting cells against glycine mischarging by AlaRS. Acts via tRNA-based rather than protein-based catalysis; rejects L-amino acids rather than detecting D-amino acids in the active site. By recycling D-aminoacyl-tRNA to D-amino acids and free tRNA molecules, this enzyme counteracts the toxicity associated with the formation of D-aminoacyl-tRNA entities in vivo and helps enforce protein L-homochirality. The sequence is that of D-aminoacyl-tRNA deacylase from Lactiplantibacillus plantarum (strain ATCC BAA-793 / NCIMB 8826 / WCFS1) (Lactobacillus plantarum).